Reading from the N-terminus, the 1522-residue chain is Lysophospholipase nte1 (1522 aa).

Positions 1–24 are disordered; sequence MADGVTQVDSTGLHSFSPSPSLSS. Over 1 to 65 the chain is Cytoplasmic; the sequence is MADGVTQVDS…LPPVPTTMAG (65 aa). The span at 15 to 24 shows a compositional bias: low complexity; the sequence is SFSPSPSLSS. Residues 66 to 86 form a helical membrane-spanning segment; that stretch reads WIGWVFSFFFQVIPSVLYWII. Residues 87–108 lie on the Lumenal side of the membrane; sequence TFSTITLPTWLFTLFSMSLTFT. A helical membrane pass occupies residues 109–129; that stretch reads MNFTTLLLIVLAVVSTISWFI. The Cytoplasmic portion of the chain corresponds to 130 to 1522; the sequence is RYRFLNMYSR…RTLAPRRASI (1393 aa). Disordered stretches follow at residues 308 to 384, 523 to 544, and 757 to 776; these read VPNS…SVHP, RAAT…GVSP, and TTTA…SRRR. Residues 369–381 are compositionally biased toward basic residues; it reads ESRKHSSRKRRKS. A nucleoside 3',5'-cyclic phosphate is bound by residues 680–800 and 840–960; these read GGTS…AVAS and RLTS…IAQR. One can recognise a PNPLA domain in the interval 1219 to 1383; that stretch reads LVLGGGGARG…IDNLTVDHMK (165 aa). Positions 1223-1228 match the GXGXXG motif; it reads GGGARG. A GXSXG motif is present at residues 1250-1254; sequence GTSIG. The active-site Nucleophile is the S1252. Catalysis depends on D1370, which acts as the Proton acceptor. The DGA/G motif lies at 1370-1372; that stretch reads DGG. A disordered region spans residues 1501 to 1522; it reads LPEETEEKKKLQRTLAPRRASI.

Belongs to the NTE family.

The protein resides in the endoplasmic reticulum membrane. It carries out the reaction a 1-acyl-sn-glycero-3-phosphocholine + H2O = sn-glycerol 3-phosphocholine + a fatty acid + H(+). With respect to regulation, inhibited by organophosphorus esters. Intracellular phospholipase B that catalyzes the double deacylation of phosphatidylcholine (PC) to glycerophosphocholine (GroPCho). Plays an important role in membrane lipid homeostasis. Responsible for the rapid PC turnover in response to inositol, elevated temperatures, or when choline is present in the growth medium. The sequence is that of Lysophospholipase nte1 (nte1) from Aspergillus fumigatus (strain ATCC MYA-4609 / CBS 101355 / FGSC A1100 / Af293) (Neosartorya fumigata).